Here is a 957-residue protein sequence, read N- to C-terminus: Glycine dehydrogenase (decarboxylating) (957 aa).

Residue K708 is modified to N6-(pyridoxal phosphate)lysine.

The protein belongs to the GcvP family. As to quaternary structure, the glycine cleavage system is composed of four proteins: P, T, L and H. Pyridoxal 5'-phosphate is required as a cofactor.

The enzyme catalyses N(6)-[(R)-lipoyl]-L-lysyl-[glycine-cleavage complex H protein] + glycine + H(+) = N(6)-[(R)-S(8)-aminomethyldihydrolipoyl]-L-lysyl-[glycine-cleavage complex H protein] + CO2. The glycine cleavage system catalyzes the degradation of glycine. The P protein binds the alpha-amino group of glycine through its pyridoxal phosphate cofactor; CO(2) is released and the remaining methylamine moiety is then transferred to the lipoamide cofactor of the H protein. This chain is Glycine dehydrogenase (decarboxylating), found in Salmonella dublin (strain CT_02021853).